The following is a 555-amino-acid chain: MTKFVFVTGGVVSSIGKGIVAASLGRLLKSRNYSVSILKLDPYINVDPGTMSPFQHGEVFVTDDGAETDLDLGHYERFTDTAMSRLNSVTTGSIYQSVLNKERRGDYEGGTVQVIPHITNEIKDRIKRVAKQATPDVLIIEIGGTVGDIESLPFLEAIRQFRKDVGRDNILYTHVTLMPWIPAAGEMKTKPTQHSVKELRSIGIQPDILVCRCDRPLSEGIKEKVSEFCDVPVEAVITSQDASSIYAVPLILEQEGLAQQVLKFMHLEQRRPDLTQWQALVHQLDHPSQTIEIALVGKYVQLSDAYLSVVESLQHAAVAQGIAVQIRWVNSEEIEAHGPDRYLADAAGIIVPGGFGIRGVDGKIAAIQYARDNQVPFLGLCLGMQCAVIEWARHIAGLEDANSAEFNPETRNPVINLLPEQQDVVDLGGTMRLGLYPCRLLPDTLASRLYPQETIVYERHRHRYEFNNAFRPLFLESGYVVSGTSPDGRLVEMIELPSHPFFIATQFHPEFRSRPNDPHPLFAGLVGACLADNGNNANHHDSTPAEPLVSEPLSS.

An amidoligase domain region spans residues 1–267 (MTKFVFVTGG…AQQVLKFMHL (267 aa)). Residue Ser13 coordinates CTP. Ser13 lines the UTP pocket. ATP contacts are provided by residues 14 to 19 (SIGKGI) and Asp71. Residues Asp71 and Glu141 each contribute to the Mg(2+) site. Residues 148–150 (DIE), 188–193 (KTKPTQ), and Lys224 each bind CTP. Residues 188–193 (KTKPTQ) and Lys224 contribute to the UTP site. Ala242 contacts ATP. In terms of domain architecture, Glutamine amidotransferase type-1 spans 299–535 (YVQLSDAYLS…VGACLADNGN (237 aa)). Gly354 is an L-glutamine binding site. Cys381 serves as the catalytic Nucleophile; for glutamine hydrolysis. L-glutamine is bound by residues 382–385 (LGMQ), Glu405, and Arg463. Residues His508 and Glu510 contribute to the active site. Residues 536 to 555 (NANHHDSTPAEPLVSEPLSS) form a disordered region.

The protein belongs to the CTP synthase family. In terms of assembly, homotetramer.

The enzyme catalyses UTP + L-glutamine + ATP + H2O = CTP + L-glutamate + ADP + phosphate + 2 H(+). The catalysed reaction is L-glutamine + H2O = L-glutamate + NH4(+). It catalyses the reaction UTP + NH4(+) + ATP = CTP + ADP + phosphate + 2 H(+). It functions in the pathway pyrimidine metabolism; CTP biosynthesis via de novo pathway; CTP from UDP: step 2/2. Its activity is regulated as follows. Allosterically activated by GTP, when glutamine is the substrate; GTP has no effect on the reaction when ammonia is the substrate. The allosteric effector GTP functions by stabilizing the protein conformation that binds the tetrahedral intermediate(s) formed during glutamine hydrolysis. Inhibited by the product CTP, via allosteric rather than competitive inhibition. Functionally, catalyzes the ATP-dependent amination of UTP to CTP with either L-glutamine or ammonia as the source of nitrogen. Regulates intracellular CTP levels through interactions with the four ribonucleotide triphosphates. This is CTP synthase from Acaryochloris marina (strain MBIC 11017).